Consider the following 80-residue polypeptide: Ubiquinol-cytochrome c reductase complex assembly factor 5 (80 aa).

The Mitochondrial matrix segment spans residues 1–19 (MFSRAQVRRALQRVPGKQR). The helical transmembrane segment at 20–41 (FGIYRFLPFFFVLGGAMEWIMI) threads the bilayer. The Mitochondrial intermembrane segment spans residues 42-80 (KVRVGQETFYDVYRRKASERQYQRRLEDTSETNLHKLIK).

The protein belongs to the UQCC5 family. Associates with the mitochondrial ribosome. Interacts with UQCC6. Interacts with MT-CYB; interacts with newly synthesizes MT-CYB. Forms a complex, named COMB/coordinator of mitochondrial CYTB biogenesis, composed of UQCC1, UQCC2, UQCC4, UQCC5 and UQCC6; stabilizes nascent cytochrome b/MT-CYB and promotes its membrane insertion.

It is found in the mitochondrion inner membrane. Its function is as follows. Required for the assembly and stability of the mitochondrial ubiquinol-cytochrome c reductase complex (complex III (CIII) or cytochrome b-c1 complex), a multisubunit transmembrane complex that is part of the mitochondrial electron transport chain (ETC) which drives oxidative phosphorylation. Mediates early complex III biogenesis. Participates in regulating the levels of electron transport chain proteins, and therefore energy supply, in response to changes in energy demand. Also required for cytochrome c oxidase complex (complex IV) assembly. This chain is Ubiquinol-cytochrome c reductase complex assembly factor 5, found in Mus musculus (Mouse).